A 524-amino-acid chain; its full sequence is Ribosomal protein uS12 methylthiotransferase RimO (524 aa).

A compositionally biased stretch (polar residues) spans 20-31 (NSQTASDSTQPA). Residues 20 to 59 (NSQTASDSTQPAASAYHHKANHNQNRSIEQSAQQAAEQSL) are disordered. Residues 48–58 (EQSAQQAAEQS) are compositionally biased toward low complexity. An MTTase N-terminal domain is found at 67 to 177 (PKVGFVSLGC…VITAVSTHAP (111 aa)). [4Fe-4S] cluster-binding residues include Cys76, Cys112, Cys141, Cys216, Cys220, and Cys223. The Radical SAM core domain occupies 202-443 (LTPSHYAYLK…MAVQQQISEQ (242 aa)). Residues 446–519 (QEKVGKTMTV…EYDLFASYDA (74 aa)) form the TRAM domain.

It belongs to the methylthiotransferase family. RimO subfamily. Requires [4Fe-4S] cluster as cofactor.

The protein resides in the cytoplasm. It carries out the reaction L-aspartate(89)-[ribosomal protein uS12]-hydrogen + (sulfur carrier)-SH + AH2 + 2 S-adenosyl-L-methionine = 3-methylsulfanyl-L-aspartate(89)-[ribosomal protein uS12]-hydrogen + (sulfur carrier)-H + 5'-deoxyadenosine + L-methionine + A + S-adenosyl-L-homocysteine + 2 H(+). Its function is as follows. Catalyzes the methylthiolation of an aspartic acid residue of ribosomal protein uS12. In Psychrobacter sp. (strain PRwf-1), this protein is Ribosomal protein uS12 methylthiotransferase RimO.